Consider the following 420-residue polypeptide: Tyrosine--tRNA ligase (420 aa).

Tyrosine 33 serves as a coordination point for L-tyrosine. The short motif at 38-47 (PTADSLHVGH) is the 'HIGH' region element. L-tyrosine is bound by residues tyrosine 167 and glutamine 171. Positions 227-231 (KFGKT) match the 'KMSKS' region motif. Lysine 230 provides a ligand contact to ATP. The 67-residue stretch at 353–419 (LTVADLLVKV…GKRNYALVKV (67 aa)) folds into the S4 RNA-binding domain.

Belongs to the class-I aminoacyl-tRNA synthetase family. TyrS type 1 subfamily. As to quaternary structure, homodimer.

It is found in the cytoplasm. It catalyses the reaction tRNA(Tyr) + L-tyrosine + ATP = L-tyrosyl-tRNA(Tyr) + AMP + diphosphate + H(+). Its function is as follows. Catalyzes the attachment of tyrosine to tRNA(Tyr) in a two-step reaction: tyrosine is first activated by ATP to form Tyr-AMP and then transferred to the acceptor end of tRNA(Tyr). This is Tyrosine--tRNA ligase from Anaeromyxobacter dehalogenans (strain 2CP-1 / ATCC BAA-258).